The sequence spans 429 residues: Glutamate-1-semialdehyde 2,1-aminomutase 2 (429 aa).

Position 267 is an N6-(pyridoxal phosphate)lysine (Lys-267).

It belongs to the class-III pyridoxal-phosphate-dependent aminotransferase family. HemL subfamily. As to quaternary structure, homodimer. It depends on pyridoxal 5'-phosphate as a cofactor.

Its subcellular location is the cytoplasm. The catalysed reaction is (S)-4-amino-5-oxopentanoate = 5-aminolevulinate. It functions in the pathway porphyrin-containing compound metabolism; protoporphyrin-IX biosynthesis; 5-aminolevulinate from L-glutamyl-tRNA(Glu): step 2/2. This Bacillus subtilis (strain 168) protein is Glutamate-1-semialdehyde 2,1-aminomutase 2 (gsaB).